We begin with the raw amino-acid sequence, 482 residues long: Dual specificity protein phosphatase 10 (482 aa).

Residues P168–D285 form the Rhodanese domain. The interaction with MAP kinases stretch occupies residues K199 to L215. The Tyrosine-protein phosphatase domain occupies E321–N464. C408 serves as the catalytic Phosphocysteine intermediate.

This sequence belongs to the protein-tyrosine phosphatase family. Non-receptor class dual specificity subfamily. Monomer. Interacts with MAPK14.

It is found in the cytoplasm. Its subcellular location is the nucleus. It carries out the reaction O-phospho-L-tyrosyl-[protein] + H2O = L-tyrosyl-[protein] + phosphate. The catalysed reaction is O-phospho-L-seryl-[protein] + H2O = L-seryl-[protein] + phosphate. It catalyses the reaction O-phospho-L-threonyl-[protein] + H2O = L-threonyl-[protein] + phosphate. Protein phosphatase involved in the inactivation of MAP kinases. Has a specificity for the MAPK11/MAPK12/MAPK13/MAPK14 subfamily. It preferably dephosphorylates p38. The sequence is that of Dual specificity protein phosphatase 10 (DUSP10) from Bos taurus (Bovine).